Reading from the N-terminus, the 340-residue chain is Glyceraldehyde-3-phosphate dehydrogenase (340 aa).

Residues 11 to 12 and G111 contribute to the NAD(+) site; that span reads SI. 140-142 serves as a coordination point for D-glyceraldehyde 3-phosphate; it reads SCN. Catalysis depends on C141, which acts as the Nucleophile. R169 is a binding site for NAD(+). 195-196 lines the D-glyceraldehyde 3-phosphate pocket; it reads HG. Position 303 (Q303) interacts with NAD(+).

It belongs to the glyceraldehyde-3-phosphate dehydrogenase family. Homotetramer.

It is found in the cytoplasm. The catalysed reaction is D-glyceraldehyde 3-phosphate + phosphate + NADP(+) = (2R)-3-phospho-glyceroyl phosphate + NADPH + H(+). It carries out the reaction D-glyceraldehyde 3-phosphate + phosphate + NAD(+) = (2R)-3-phospho-glyceroyl phosphate + NADH + H(+). The protein operates within carbohydrate degradation; glycolysis; pyruvate from D-glyceraldehyde 3-phosphate: step 1/5. The polypeptide is Glyceraldehyde-3-phosphate dehydrogenase (Methanococcus maripaludis (strain DSM 14266 / JCM 13030 / NBRC 101832 / S2 / LL)).